Reading from the N-terminus, the 118-residue chain is Large ribosomal subunit protein bL20 (118 aa).

Belongs to the bacterial ribosomal protein bL20 family.

Its function is as follows. Binds directly to 23S ribosomal RNA and is necessary for the in vitro assembly process of the 50S ribosomal subunit. It is not involved in the protein synthesizing functions of that subunit. The protein is Large ribosomal subunit protein bL20 of Methylibium petroleiphilum (strain ATCC BAA-1232 / LMG 22953 / PM1).